Reading from the N-terminus, the 214-residue chain is ATP phosphoribosyltransferase (214 aa).

Belongs to the ATP phosphoribosyltransferase family. Short subfamily. Heteromultimer composed of HisG and HisZ subunits.

Its subcellular location is the cytoplasm. It carries out the reaction 1-(5-phospho-beta-D-ribosyl)-ATP + diphosphate = 5-phospho-alpha-D-ribose 1-diphosphate + ATP. It functions in the pathway amino-acid biosynthesis; L-histidine biosynthesis; L-histidine from 5-phospho-alpha-D-ribose 1-diphosphate: step 1/9. Its function is as follows. Catalyzes the condensation of ATP and 5-phosphoribose 1-diphosphate to form N'-(5'-phosphoribosyl)-ATP (PR-ATP). Has a crucial role in the pathway because the rate of histidine biosynthesis seems to be controlled primarily by regulation of HisG enzymatic activity. In Aquifex aeolicus (strain VF5), this protein is ATP phosphoribosyltransferase (hisG).